A 1567-amino-acid chain; its full sequence is ABC multidrug transporter MDR1 (1567 aa).

Over residues 1-11 (MASQPPQPPSG) the composition is skewed to pro residues. Positions 1-37 (MASQPPQPPSGQPDTQYEEYQSEVITETTNRPTPAAD) are disordered. Polar residues predominate over residues 22–32 (SEVITETTNRP). N-linked (GlcNAc...) asparagine glycosylation is found at asparagine 149, asparagine 157, and asparagine 356. One can recognise an ABC transporter 1 domain in the interval 167–432 (VQYQDTFLSP…FEEMGWYCPP (266 aa)). The next 6 membrane-spanning stretches (helical) occupy residues 543–563 (STIATNISQIMMALIIGSLFF), 571–591 (GFFAKGSVIFFAILLNGLMSI), 636–656 (IPIKFLLALVFNIIIYFLGGL), 661–681 (AKFFIFFLFTFITILTMSAIF), 691–711 (IPQALALAGVMILALVIYTGF), and 798–818 (LGILLGFLAFFYFVYLVVSEL). Residues asparagine 819, asparagine 895, and asparagine 912 are each glycosylated (N-linked (GlcNAc...) asparagine). The ABC transporter 2 domain maps to 891 to 1134 (FTWRNVTYDI…LLNYFETHGA (244 aa)). Residue 927-934 (GVSGAGKT) participates in ATP binding. A disordered region spans residues 1172-1202 (ESRHVQQELDRIQSETSKRNEGHGQSAEKEP). The helical transmembrane segment at 1231-1251 (IWGKLLLGLTSALFIGFSFFL) threads the bilayer. N-linked (GlcNAc...) asparagine glycosylation occurs at asparagine 1253. 5 helical membrane-spanning segments follow: residues 1257–1277 (AGLQNSLFSIFMLTTIFSSLV), 1305–1325 (VFLLANIIVEIPYQILLGIIA), 1345–1365 (ILLLYCVQFFIFASTFAQMII), 1372–1392 (ETAGGIATTMFGLMVTFNGVL), and 1498–1518 (GIGWAYIVFNIFATVALYYLI).

This sequence belongs to the ABC transporter superfamily. ABCG family. PDR (TC 3.A.1.205) subfamily.

It localises to the cell membrane. The catalysed reaction is voriconazole(in) + ATP + H2O = voriconazole(out) + ADP + phosphate + H(+). It catalyses the reaction fluconazole(in) + ATP + H2O = fluconazole(out) + ADP + phosphate + H(+). It carries out the reaction (R)-miconazole(in) + ATP + H2O = (R)-miconazole(out) + ADP + phosphate + H(+). The enzyme catalyses (S)-miconazole(in) + ATP + H2O = (S)-miconazole(out) + ADP + phosphate + H(+). Functionally, pleiotropic ABC efflux transporter that may be involved in the modulation susceptibility to a wide range of unrelated cytotoxic compounds. In Trichophyton equinum (strain ATCC MYA-4606 / CBS 127.97) (Horse ringworm fungus), this protein is ABC multidrug transporter MDR1.